Here is a 536-residue protein sequence, read N- to C-terminus: Probable pectinesterase/pectinesterase inhibitor 59 (536 aa).

The first 30 residues, 1-30, serve as a signal peptide directing secretion; the sequence is MNMMMQKLSILFLHLILLVLLCVHPLTTVA. The pectinesterase inhibitor 59 stretch occupies residues 31–183; it reads DRNSTDWCDK…SHLISNCLAV (153 aa). N-linked (GlcNAc...) asparagine glycans are attached at residues asparagine 33, asparagine 91, asparagine 116, asparagine 159, and asparagine 195. The interval 221–522 is pectinesterase 59; it reads NLVVAKDGSG…FTVGKFIAGT (302 aa). Residues threonine 298 and glutamine 328 each coordinate substrate. Residue aspartate 351 is the Proton donor; for pectinesterase activity of the active site. Residues cysteine 365 and cysteine 385 are joined by a disulfide bond. The active-site Nucleophile; for pectinesterase activity is aspartate 372. Substrate-binding residues include arginine 440 and tryptophan 442.

The protein in the N-terminal section; belongs to the PMEI family. This sequence in the C-terminal section; belongs to the pectinesterase family. As to expression, expressed in siliques.

The protein localises to the secreted. The protein resides in the cell wall. It catalyses the reaction [(1-&gt;4)-alpha-D-galacturonosyl methyl ester](n) + n H2O = [(1-&gt;4)-alpha-D-galacturonosyl](n) + n methanol + n H(+). It functions in the pathway glycan metabolism; pectin degradation; 2-dehydro-3-deoxy-D-gluconate from pectin: step 1/5. Its function is as follows. Acts in the modification of cell walls via demethylesterification of cell wall pectin. In Arabidopsis thaliana (Mouse-ear cress), this protein is Probable pectinesterase/pectinesterase inhibitor 59 (PME59).